Consider the following 98-residue polypeptide: Pore-forming peptide amoebapore A (98 aa).

A signal peptide spans 1-21 (MKAIVFVLIFAVAFAVTATHQ). Residues 22 to 98 (GEILCNLCTG…NAICAKIHAC (77 aa)) enclose the Saposin B-type domain. Disulfide bonds link cysteine 26–cysteine 98, cysteine 29–cysteine 92, and cysteine 56–cysteine 67.

As to quaternary structure, monomer (at pH below 4 and pH above 6). Homodimer (at pH 4-6). Hexamer; formed during insertion in the membrane.

It localises to the cytoplasmic granule. Functionally, forms pores in the cell membrane of host cells. Has antibacterial activity against M.luteus, no activity against E.coli. Implicated in the cytolytic activity of the parasite. In Entamoeba histolytica (strain ATCC 30459 / HM-1:IMSS / ABRM), this protein is Pore-forming peptide amoebapore A.